The sequence spans 485 residues: ATP synthase subunit beta (485 aa).

158–165 (GGAGVGKT) lines the ATP pocket.

Belongs to the ATPase alpha/beta chains family. In terms of assembly, F-type ATPases have 2 components, CF(1) - the catalytic core - and CF(0) - the membrane proton channel. CF(1) has five subunits: alpha(3), beta(3), gamma(1), delta(1), epsilon(1). CF(0) has four main subunits: a(1), b(1), b'(1) and c(9-12).

It localises to the cell inner membrane. The catalysed reaction is ATP + H2O + 4 H(+)(in) = ADP + phosphate + 5 H(+)(out). Its function is as follows. Produces ATP from ADP in the presence of a proton gradient across the membrane. The catalytic sites are hosted primarily by the beta subunits. The polypeptide is ATP synthase subunit beta (Erythrobacter litoralis (strain HTCC2594)).